Here is a 309-residue protein sequence, read N- to C-terminus: Olfactory receptor 2G3 (309 aa).

Residues 1–25 are Extracellular-facing; sequence MGLGNESSLMDFILLGFSDHPRLEA. N-linked (GlcNAc...) asparagine glycosylation occurs at Asn5. The helical transmembrane segment at 26–49 threads the bilayer; sequence VLFVFVLFFYLLTLVGNFTIIIIS. The Cytoplasmic portion of the chain corresponds to 50–57; it reads YLDPPLHT. Residues 58-79 traverse the membrane as a helical segment; sequence PMYFFLSNLSLLDICFTTSLAP. The Extracellular segment spans residues 80-100; it reads QTLVNLQRPKKTITYGGCVAQ. Residues Cys97 and Cys189 are joined by a disulfide bond. A helical transmembrane segment spans residues 101–120; it reads LYISLALGSTECILLADMAL. Residues 121 to 139 are Cytoplasmic-facing; sequence DRYIAVCKPLHYVVIMNPR. Residues 140 to 158 form a helical membrane-spanning segment; sequence LCQQLASISWLSGLASSLI. At 159–195 the chain is on the extracellular side; sequence HATFTLQLPLCGNHRLDHFICEVPALLKLACVDTTVN. The chain crosses the membrane as a helical span at residues 196 to 219; sequence ELVLFVVSVLFVVIPPALISISYG. Over 220–236 the chain is Cytoplasmic; sequence FITQAVLRIKSVEARHK. Residues 237-259 form a helical membrane-spanning segment; it reads AFSTCSSHLTVVIIFYGTIIYVY. Residues 260–272 are Extracellular-facing; that stretch reads LQPSDSYAQDQGK. A helical membrane pass occupies residues 273–292; that stretch reads FISLFYTMVTPTLNPIIYTL. Over 293–309 the chain is Cytoplasmic; that stretch reads RNKDMKEALRKLLSGKL.

It belongs to the G-protein coupled receptor 1 family.

It localises to the cell membrane. Its function is as follows. Odorant receptor. The chain is Olfactory receptor 2G3 (OR2G3) from Homo sapiens (Human).